We begin with the raw amino-acid sequence, 309 residues long: Ribonuclease Z (309 aa).

His-63, His-65, Asp-67, His-68, His-145, Asp-216, and His-274 together coordinate Zn(2+). Catalysis depends on Asp-67, which acts as the Proton acceptor.

Belongs to the RNase Z family. In terms of assembly, homodimer. Zn(2+) is required as a cofactor.

It catalyses the reaction Endonucleolytic cleavage of RNA, removing extra 3' nucleotides from tRNA precursor, generating 3' termini of tRNAs. A 3'-hydroxy group is left at the tRNA terminus and a 5'-phosphoryl group is left at the trailer molecule.. In terms of biological role, zinc phosphodiesterase, which displays some tRNA 3'-processing endonuclease activity. Probably involved in tRNA maturation, by removing a 3'-trailer from precursor tRNA. The protein is Ribonuclease Z of Streptococcus equi subsp. equi (strain 4047).